A 267-amino-acid chain; its full sequence is Phosphate import ATP-binding protein PstB (267 aa).

The ABC transporter domain occupies 21-262 (IAIRNLEFYY…PSKQQTEDYI (242 aa)). Position 53 to 60 (53 to 60 (GPSGCGKS)) interacts with ATP.

It belongs to the ABC transporter superfamily. Phosphate importer (TC 3.A.1.7) family. As to quaternary structure, the complex is composed of two ATP-binding proteins (PstB), two transmembrane proteins (PstC and PstA) and a solute-binding protein (PstS).

Its subcellular location is the cell inner membrane. It carries out the reaction phosphate(out) + ATP + H2O = ADP + 2 phosphate(in) + H(+). Part of the ABC transporter complex PstSACB involved in phosphate import. Responsible for energy coupling to the transport system. The polypeptide is Phosphate import ATP-binding protein PstB (Xylella fastidiosa (strain 9a5c)).